Consider the following 428-residue polypeptide: Chaperone SurA (428 aa).

A signal peptide spans 1–13 (MLGALLLSGAVHA). PpiC domains lie at 164–265 (SEEF…KLLE) and 276–375 (RDEV…EVLG).

The protein localises to the periplasm. It catalyses the reaction [protein]-peptidylproline (omega=180) = [protein]-peptidylproline (omega=0). In terms of biological role, chaperone involved in the correct folding and assembly of outer membrane proteins. Recognizes specific patterns of aromatic residues and the orientation of their side chains, which are found more frequently in integral outer membrane proteins. May act in both early periplasmic and late outer membrane-associated steps of protein maturation. The protein is Chaperone SurA of Pseudomonas savastanoi pv. phaseolicola (strain 1448A / Race 6) (Pseudomonas syringae pv. phaseolicola (strain 1448A / Race 6)).